The primary structure comprises 1482 residues: Type VII secretion system protein EssC (1482 aa).

Residues 1–229 (MHKLIIKYNK…RPPQPIQKNN (229 aa)) are Cytoplasmic-facing. Residues 230–252 (TVIWRSIIPPLVMIALTVVIFLV) form a helical membrane-spanning segment. The Extracellular portion of the chain corresponds to 253 to 256 (RPIG). A helical transmembrane segment spans residues 257–279 (IYILMMIGMSTVTIVFGITTYFS). Residues 280-1482 (EKKKYNKDVE…EYQKIKLMEG (1203 aa)) are Cytoplasmic-facing. 2 consecutive FtsK domains span residues 652–846 (DDIL…QDSN) and 997–1183 (QGPM…NELT). Residues 672 to 679 (GTTGSGKS) and 1014 to 1021 (GSPGYGRT) each bind ATP.

It belongs to the EssC family. Homooligomer. Interacts with EsaE.

It localises to the cell membrane. In terms of biological role, component of the type VII secretion system (Ess). Required for the secretion of substrates including EsxA and EsxB. However, unable to support secretion of the substrate protein EsxC. This chain is Type VII secretion system protein EssC, found in Staphylococcus aureus (strain MRSA252).